The primary structure comprises 417 residues: Gamma-glutamyl phosphate reductase (417 aa).

It belongs to the gamma-glutamyl phosphate reductase family.

It localises to the cytoplasm. The enzyme catalyses L-glutamate 5-semialdehyde + phosphate + NADP(+) = L-glutamyl 5-phosphate + NADPH + H(+). It functions in the pathway amino-acid biosynthesis; L-proline biosynthesis; L-glutamate 5-semialdehyde from L-glutamate: step 2/2. Functionally, catalyzes the NADPH-dependent reduction of L-glutamate 5-phosphate into L-glutamate 5-semialdehyde and phosphate. The product spontaneously undergoes cyclization to form 1-pyrroline-5-carboxylate. This chain is Gamma-glutamyl phosphate reductase, found in Escherichia coli (strain K12 / MC4100 / BW2952).